A 1972-amino-acid polypeptide reads, in one-letter code: Myosin-11 (1972 aa).

Ser8, Ser23, and Ser40 each carry phosphoserine. Positions 31-81 (AAKRLVWVPSEKQGFEAASIKEEKGDEVVVELVENGKKVTVGKDDIQKMNP) constitute a Myosin N-terminal SH3-like domain. Residues 85 to 783 (SKVEDMAELT…VLAHLEEERD (699 aa)) enclose the Myosin motor domain. Lys129 is subject to N6,N6,N6-trimethyllysine. 178–185 (GESGAGKT) lines the ATP pocket. Actin-binding regions lie at residues 661-683 (LGKL…IPNH) and 762-776 (RIGQ…GVLA). Residues 786–815 (ITDVIMAFQAMCRGYLARKAFAKRQQQLTA) form the IQ domain. Residues 844-1934 (LLQVTRQEEE…KSKLRRGNET (1091 aa)) adopt a coiled-coil conformation. Positions 858–882 (EDELQKTKERQQKAENELKELEQKH) are disordered. At Thr1177 the chain carries Phosphothreonine. Phosphoserine occurs at positions 1684 and 1722. 2 disordered regions span residues 1744–1800 (ELEE…LRSK) and 1866–1972 (EQYK…KASE). The segment covering 1762 to 1788 (ATQQAEQLSNELATERSTAQKNESARQ) has biased composition (polar residues). Basic and acidic residues-rich tracts occupy residues 1789-1800 (QLERQNKELRSK) and 1866-1876 (EQYKEQAEKGN). Residues 1935 to 1972 (SFVPSRRSGGRRVIENADGSEEETDTRDADFNGTKASE) are C-terminal. At Ser1954 the chain carries Phosphoserine. Position 1958 is a phosphothreonine (Thr1958). Ser1971 bears the Phosphoserine mark.

Belongs to the TRAFAC class myosin-kinesin ATPase superfamily. Myosin family. As to quaternary structure, muscle myosin is a hexameric protein that consists of 2 heavy chain subunits (MHC), 2 alkali light chain subunits (MLC) and 2 regulatory light chain subunits (MLC-2). Smooth muscle; expressed in the umbilical artery, bladder, esophagus and trachea. Isoform 1 is mostly found in slowly contracting tonic muscles.

The protein localises to the melanosome. In terms of biological role, muscle contraction. This is Myosin-11 (MYH11) from Homo sapiens (Human).